The following is a 209-amino-acid chain: MNYTKEVALSLLKIEAVRLRPEEPFKWASGWNSPIYCDNRLTLSFPESRNLIRDGLVDLIRTHYPACECIAGVATAGIPQGAIIADSMNLPMIYVRPKPKDHGMQNLIEGKITKGQKIVVVEDLISTGGSSLKAVEALQEGGFEILGMIGIFTYGFQIAEDNFKNAGITLHTLSNYDELIKEAVANNYVKQDQLQTLGEWRKNPGDWKK.

Residues arginine 96, lysine 100, histidine 102, and 122-130 (EDLISTGGS) each bind 5-phospho-alpha-D-ribose 1-diphosphate. Serine 126 lines the orotate pocket.

This sequence belongs to the purine/pyrimidine phosphoribosyltransferase family. PyrE subfamily. Homodimer. Mg(2+) serves as cofactor.

The catalysed reaction is orotidine 5'-phosphate + diphosphate = orotate + 5-phospho-alpha-D-ribose 1-diphosphate. The protein operates within pyrimidine metabolism; UMP biosynthesis via de novo pathway; UMP from orotate: step 1/2. In terms of biological role, catalyzes the transfer of a ribosyl phosphate group from 5-phosphoribose 1-diphosphate to orotate, leading to the formation of orotidine monophosphate (OMP). This is Orotate phosphoribosyltransferase from Cytophaga hutchinsonii (strain ATCC 33406 / DSM 1761 / CIP 103989 / NBRC 15051 / NCIMB 9469 / D465).